The chain runs to 255 residues: 4-hydroxy-tetrahydrodipicolinate reductase (255 aa).

NAD(+) contacts are provided by residues 8 to 13 (GATGRV), 88 to 90 (GTT), and 112 to 115 (ATNM). The Proton donor/acceptor role is filled by H144. H145 is a binding site for (S)-2,3,4,5-tetrahydrodipicolinate. K148 functions as the Proton donor in the catalytic mechanism. Position 154–155 (154–155 (GT)) interacts with (S)-2,3,4,5-tetrahydrodipicolinate.

This sequence belongs to the DapB family.

It localises to the cytoplasm. It catalyses the reaction (S)-2,3,4,5-tetrahydrodipicolinate + NAD(+) + H2O = (2S,4S)-4-hydroxy-2,3,4,5-tetrahydrodipicolinate + NADH + H(+). It carries out the reaction (S)-2,3,4,5-tetrahydrodipicolinate + NADP(+) + H2O = (2S,4S)-4-hydroxy-2,3,4,5-tetrahydrodipicolinate + NADPH + H(+). The protein operates within amino-acid biosynthesis; L-lysine biosynthesis via DAP pathway; (S)-tetrahydrodipicolinate from L-aspartate: step 4/4. Functionally, catalyzes the conversion of 4-hydroxy-tetrahydrodipicolinate (HTPA) to tetrahydrodipicolinate. The sequence is that of 4-hydroxy-tetrahydrodipicolinate reductase from Helicobacter hepaticus (strain ATCC 51449 / 3B1).